A 178-amino-acid chain; its full sequence is Large ribosomal subunit protein uL6 (178 aa).

The protein belongs to the universal ribosomal protein uL6 family. In terms of assembly, part of the 50S ribosomal subunit.

This protein binds to the 23S rRNA, and is important in its secondary structure. It is located near the subunit interface in the base of the L7/L12 stalk, and near the tRNA binding site of the peptidyltransferase center. The protein is Large ribosomal subunit protein uL6 of Staphylococcus saprophyticus subsp. saprophyticus (strain ATCC 15305 / DSM 20229 / NCIMB 8711 / NCTC 7292 / S-41).